The primary structure comprises 187 residues: Interferon alpha-3 (187 aa).

An N-terminal signal peptide occupies residues 1–23; that stretch reads MALPCSFSVALVLLSCHSLCCLA. Intrachain disulfides connect Cys24/Cys122 and Cys52/Cys160. Asn94 and Asn101 each carry an N-linked (GlcNAc...) asparagine glycan.

The protein belongs to the alpha/beta interferon family.

Its subcellular location is the secreted. Produced by macrophages, IFN-alpha have antiviral activities. Interferon stimulates the production of two enzymes: a protein kinase and an oligoadenylate synthetase. The polypeptide is Interferon alpha-3 (Canis lupus familiaris (Dog)).